The chain runs to 258 residues: MLAKRIIPCLDIHNGQVIKGMQFRNHKVIGDIVPMAQRYAKEGADELVFYDITASSEGRVVDKSWIARVAEVIDIPFCVAGGIKSVAQAGEVISFGADKISINSPALNDPYLISRLADRFGVQCIVASIDTWYDIQLDRYQVNQYTGDENRTKVTNWQTLDWVQEVQKLGAGEIVLNMMNQDGVCRGYDLQQLRLVRQTCHVPLIASGGAGTMQHFQEALINAEVDGVLAASVFHKNIINILELKKFLAREGVEIRLC.

Catalysis depends on residues D11 and D130.

The protein belongs to the HisA/HisF family. In terms of assembly, heterodimer of HisH and HisF.

Its subcellular location is the cytoplasm. It carries out the reaction 5-[(5-phospho-1-deoxy-D-ribulos-1-ylimino)methylamino]-1-(5-phospho-beta-D-ribosyl)imidazole-4-carboxamide + L-glutamine = D-erythro-1-(imidazol-4-yl)glycerol 3-phosphate + 5-amino-1-(5-phospho-beta-D-ribosyl)imidazole-4-carboxamide + L-glutamate + H(+). It functions in the pathway amino-acid biosynthesis; L-histidine biosynthesis; L-histidine from 5-phospho-alpha-D-ribose 1-diphosphate: step 5/9. Its function is as follows. IGPS catalyzes the conversion of PRFAR and glutamine to IGP, AICAR and glutamate. The HisF subunit catalyzes the cyclization activity that produces IGP and AICAR from PRFAR using the ammonia provided by the HisH subunit. The protein is Imidazole glycerol phosphate synthase subunit HisF of Baumannia cicadellinicola subsp. Homalodisca coagulata.